The primary structure comprises 615 residues: Dehydrogenase str4 (615 aa).

Residues 45 to 46, 66 to 67, and 123 to 126 contribute to the FAD site; these read TA, EA, and NGSM. His552 acts as the Proton acceptor in catalysis. FAD contacts are provided by residues Ala585 and 596–597; that span reads PA.

The protein belongs to the GMC oxidoreductase family. Homodimer. It depends on FAD as a cofactor.

It participates in mycotoxin biosynthesis. Dehydrogenase; part of the gene cluster that mediates the biosynthesis of strobilurin A, an antifungal polyketide that contains a key beta-methoxyacrylate toxophore that targets the complex III of the mitochondrial electron transport chain. Strobilurin biosynthesis begins with construction of benzoyl CoA by step-wise elimination of ammonia from phenylalanine by the phenylalanine ammonia-lyase str11, oxygenation by str8 and retro-Claisen reaction to form benzoic acid, which is activated to its CoA thiolester benzoyl CoA by the dedicated CoA ligase str10. Benzoyl CoA forms the starter unit for the highly reducing polyketide synthase stpks1 that produces the polyketide prestrobilutin A. The FAD-dependent oxygenase str9 then catalyzes the key oxidative rearrangement responsible for the creation of the beta-methoxyacrylate toxophore. Str9 performs epoxidation of the 2,3 olefin of prestrobilutin A, followed by Meinwald rearrangement to furnish the aldehyde intermediate. Rapid enolization of the aldehyde intermediate would give the beta-methoxyacrylate skeleton and methylations catalyzed by str2 and str3 complete the synthesis and lead to the production of strobilurin A. The short-chain dehydrogenase stl2 and the dehydrogenase str4 play a role in the shunt pathway leading to the production of bolineol. The cluster encodes no obvious halogenase gene that could be involved in production of strobilurin B, nor any obvious dimethylallyl-transferase that could be involved in the production of strobilurin G. It is possible that unknown proteins encoded in, or near, the cluster (such as str1 or stl1) may form new classes of halogenases or dimethylally-transferases, or that the responsible genes are located elsewhere on the genome. Similarly, proteins encoded by str5/str6 hydrolases appear to have no chemical role in the biosynthesis of strobilurin A. Finally, no obvious self-resistance gene is found within the cluster. The polypeptide is Dehydrogenase str4 (Strobilurus tenacellus).